The following is a 154-amino-acid chain: Transcriptional repressor NrdR (154 aa).

A zinc finger lies at 3–34 (CPFCSHNDSKVIDSRPTDEGQAIRRRRECISC). The region spanning 49 to 139 (LIVVKKNGNR…VYREFKDINT (91 aa)) is the ATP-cone domain.

This sequence belongs to the NrdR family. Requires Zn(2+) as cofactor.

Its function is as follows. Negatively regulates transcription of bacterial ribonucleotide reductase nrd genes and operons by binding to NrdR-boxes. The protein is Transcriptional repressor NrdR of Alkaliphilus oremlandii (strain OhILAs) (Clostridium oremlandii (strain OhILAs)).